We begin with the raw amino-acid sequence, 98 residues long: Protein S100-A11 (98 aa).

Threonine 5 bears the Phosphothreonine mark. EF-hand domains lie at 12 to 47 (LIAV…AFTK) and 50 to 85 (KDPG…LAIA). The residue at position 22 (lysine 22) is an N6-acetyllysine. Positions 26, 28, 33, 63, 65, 67, 69, and 74 each coordinate Ca(2+).

The protein belongs to the S-100 family. In terms of assembly, homodimer; disulfide-linked. Post-translationally, phosphorylation at Thr-5 significantly suppresses homodimerization and promotes association with NCL/nucleolin which induces nuclear translocation.

Its subcellular location is the cytoplasm. It is found in the nucleus. In terms of biological role, facilitates the differentiation and the cornification of keratinocytes. In Rattus norvegicus (Rat), this protein is Protein S100-A11 (S100a11).